The sequence spans 1285 residues: Peroxisomal ATPase PEX1 (1285 aa).

The segment covering 344–353 has biased composition (polar residues); sequence QQGKTKQSVM. The tract at residues 344 to 373 is disordered; sequence QQGKTKQSVMSPEKEKHPLESPNHKQIGSD. Serine 354 carries the phosphoserine modification. Residues 355-373 are compositionally biased toward basic and acidic residues; the sequence is PEKEKHPLESPNHKQIGSD. ATP-binding positions include 601-608 and 883-890; these read GGKGSGKS and GPPGTGKT. A compositionally biased stretch (polar residues) spans 1142–1161; it reads NGTSSDLSSQCPSAPSSVTQ. Residues 1142-1162 form a disordered region; sequence NGTSSDLSSQCPSAPSSVTQD. 3 positions are modified to phosphoserine: serine 1183, serine 1211, and serine 1213. Positions 1262 to 1285 are disordered; the sequence is FQNPKKRKNPSGTVFRPGQKVTLA.

This sequence belongs to the AAA ATPase family. In terms of assembly, homooligomer; homooligomerizes in the cytosol, interaction with PEX6 promotes dissociation of the homooligomer. Interacts with PEX6; forming the PEX1-PEX6 AAA ATPase complex, which is composed of a heterohexamer formed by a trimer of PEX1-PEX6 dimers. Interacts indirectly with PEX26, via its interaction with PEX6.

The protein localises to the cytoplasm. Its subcellular location is the cytosol. It localises to the peroxisome membrane. It catalyses the reaction ATP + H2O = ADP + phosphate + H(+). Its function is as follows. Component of the PEX1-PEX6 AAA ATPase complex, a protein dislocase complex that mediates the ATP-dependent extraction of the PEX5 receptor from peroxisomal membranes, an essential step for PEX5 recycling. Specifically recognizes PEX5 monoubiquitinated at 'Cys-11', and pulls it out of the peroxisome lumen through the PEX2-PEX10-PEX12 retrotranslocation channel. Extraction by the PEX1-PEX6 AAA ATPase complex is accompanied by unfolding of the TPR repeats and release of bound cargo from PEX5. The chain is Peroxisomal ATPase PEX1 from Cricetulus griseus (Chinese hamster).